The sequence spans 168 residues: uncharacterized protein (168 aa).

A signal peptide (or 19) is located at residues 1 to 21; it reads MKLLKALAVLSLATISSHSFA.

This is an uncharacterized protein from Haemophilus influenzae (strain ATCC 51907 / DSM 11121 / KW20 / Rd).